Here is a 476-residue protein sequence, read N- to C-terminus: ATP synthase subunit beta (476 aa).

Residue 153–160 participates in ATP binding; sequence GGAGVGKT.

Belongs to the ATPase alpha/beta chains family. In terms of assembly, F-type ATPases have 2 components, CF(1) - the catalytic core - and CF(0) - the membrane proton channel. CF(1) has five subunits: alpha(3), beta(3), gamma(1), delta(1), epsilon(1). CF(0) has three main subunits: a(1), b(2) and c(9-12). The alpha and beta chains form an alternating ring which encloses part of the gamma chain. CF(1) is attached to CF(0) by a central stalk formed by the gamma and epsilon chains, while a peripheral stalk is formed by the delta and b chains.

Its subcellular location is the cell membrane. The catalysed reaction is ATP + H2O + 4 H(+)(in) = ADP + phosphate + 5 H(+)(out). Its function is as follows. Produces ATP from ADP in the presence of a proton gradient across the membrane. The catalytic sites are hosted primarily by the beta subunits. The chain is ATP synthase subunit beta from Latilactobacillus sakei subsp. sakei (strain 23K) (Lactobacillus sakei subsp. sakei).